The sequence spans 260 residues: MLHIADKTFDSHLIMGTGGATSQALLEESLVASGTQLTTVAMRRHQATTSSGESIFAMLRRLEIALLPNTAGCRTARDAVLTAQLAREALDTNWVKVEVIADEHTLLPDTVELLDACELLVHDGFTVLAYTSDDPITASRLEDCGVAAVMPLGSPIGTGLGILNPHNIELICSRASVPVILDAGVGTASDATLAMELGCDGVLLASAINRAQNPVAMAESMFHAVEAGRLAAQAGRIPQRQHAVASSSFEGLASWAEQVL.

K96 acts as the Schiff-base intermediate with DXP in catalysis. Residues G157, A183–G184, and A205–S206 each bind 1-deoxy-D-xylulose 5-phosphate.

It belongs to the ThiG family. As to quaternary structure, homotetramer. Forms heterodimers with either ThiH or ThiS.

The protein localises to the cytoplasm. It carries out the reaction [ThiS sulfur-carrier protein]-C-terminal-Gly-aminoethanethioate + 2-iminoacetate + 1-deoxy-D-xylulose 5-phosphate = [ThiS sulfur-carrier protein]-C-terminal Gly-Gly + 2-[(2R,5Z)-2-carboxy-4-methylthiazol-5(2H)-ylidene]ethyl phosphate + 2 H2O + H(+). The protein operates within cofactor biosynthesis; thiamine diphosphate biosynthesis. Catalyzes the rearrangement of 1-deoxy-D-xylulose 5-phosphate (DXP) to produce the thiazole phosphate moiety of thiamine. Sulfur is provided by the thiocarboxylate moiety of the carrier protein ThiS. In vitro, sulfur can be provided by H(2)S. This Corynebacterium glutamicum (strain ATCC 13032 / DSM 20300 / JCM 1318 / BCRC 11384 / CCUG 27702 / LMG 3730 / NBRC 12168 / NCIMB 10025 / NRRL B-2784 / 534) protein is Thiazole synthase.